Here is a 421-residue protein sequence, read N- to C-terminus: uncharacterized protein (421 aa).

CBS domains are found at residues 13–74 (MTKD…VRSL), 74–133 (LMYK…MKDT), 139–195 (MTRN…PKKK), and 217–274 (MNTP…KGAM).

This is an uncharacterized protein from Methanocaldococcus jannaschii (strain ATCC 43067 / DSM 2661 / JAL-1 / JCM 10045 / NBRC 100440) (Methanococcus jannaschii).